Here is an 81-residue protein sequence, read N- to C-terminus: ATP synthase subunit c, chloroplastic (81 aa).

The next 2 helical transmembrane spans lie at 3-23 (AIVSAASVIAAGLAVGLAAIG) and 57-77 (LAFMESLTIYGLVVALSLLFA).

This sequence belongs to the ATPase C chain family. In terms of assembly, F-type ATPases have 2 components, F(1) - the catalytic core - and F(0) - the membrane proton channel. F(1) has five subunits: alpha(3), beta(3), gamma(1), delta(1), epsilon(1). F(0) has four main subunits: a(1), b(1), b'(1) and c(10-14). The alpha and beta chains form an alternating ring which encloses part of the gamma chain. F(1) is attached to F(0) by a central stalk formed by the gamma and epsilon chains, while a peripheral stalk is formed by the delta, b and b' chains.

It localises to the plastid. Its subcellular location is the chloroplast thylakoid membrane. Functionally, f(1)F(0) ATP synthase produces ATP from ADP in the presence of a proton or sodium gradient. F-type ATPases consist of two structural domains, F(1) containing the extramembraneous catalytic core and F(0) containing the membrane proton channel, linked together by a central stalk and a peripheral stalk. During catalysis, ATP synthesis in the catalytic domain of F(1) is coupled via a rotary mechanism of the central stalk subunits to proton translocation. Key component of the F(0) channel; it plays a direct role in translocation across the membrane. A homomeric c-ring of between 10-14 subunits forms the central stalk rotor element with the F(1) delta and epsilon subunits. The chain is ATP synthase subunit c, chloroplastic from Cyanidioschyzon merolae (strain NIES-3377 / 10D) (Unicellular red alga).